The chain runs to 90 residues: Large ribosomal subunit protein bL27 (90 aa).

Residues 1-21 (MASKKAGGSTRNGRDSEAKRL) form a disordered region.

This sequence belongs to the bacterial ribosomal protein bL27 family.

This chain is Large ribosomal subunit protein bL27, found in Neisseria meningitidis serogroup C (strain 053442).